The following is a 206-amino-acid chain: Thiamine-phosphate synthase (206 aa).

4-amino-2-methyl-5-(diphosphooxymethyl)pyrimidine-binding positions include 39 to 43 (QYREK) and Asn-74. Mg(2+) contacts are provided by Asp-75 and Asp-94. 4-amino-2-methyl-5-(diphosphooxymethyl)pyrimidine is bound at residue Ser-112. 138–140 (TNT) lines the 2-[(2R,5Z)-2-carboxy-4-methylthiazol-5(2H)-ylidene]ethyl phosphate pocket. Lys-141 is a 4-amino-2-methyl-5-(diphosphooxymethyl)pyrimidine binding site. Residues Gly-170 and 190 to 191 (IS) contribute to the 2-[(2R,5Z)-2-carboxy-4-methylthiazol-5(2H)-ylidene]ethyl phosphate site.

The protein belongs to the thiamine-phosphate synthase family. Mg(2+) serves as cofactor.

It catalyses the reaction 2-[(2R,5Z)-2-carboxy-4-methylthiazol-5(2H)-ylidene]ethyl phosphate + 4-amino-2-methyl-5-(diphosphooxymethyl)pyrimidine + 2 H(+) = thiamine phosphate + CO2 + diphosphate. The catalysed reaction is 2-(2-carboxy-4-methylthiazol-5-yl)ethyl phosphate + 4-amino-2-methyl-5-(diphosphooxymethyl)pyrimidine + 2 H(+) = thiamine phosphate + CO2 + diphosphate. It carries out the reaction 4-methyl-5-(2-phosphooxyethyl)-thiazole + 4-amino-2-methyl-5-(diphosphooxymethyl)pyrimidine + H(+) = thiamine phosphate + diphosphate. Its pathway is cofactor biosynthesis; thiamine diphosphate biosynthesis; thiamine phosphate from 4-amino-2-methyl-5-diphosphomethylpyrimidine and 4-methyl-5-(2-phosphoethyl)-thiazole: step 1/1. Its function is as follows. Condenses 4-methyl-5-(beta-hydroxyethyl)thiazole monophosphate (THZ-P) and 2-methyl-4-amino-5-hydroxymethyl pyrimidine pyrophosphate (HMP-PP) to form thiamine monophosphate (TMP). The protein is Thiamine-phosphate synthase of Oceanobacillus iheyensis (strain DSM 14371 / CIP 107618 / JCM 11309 / KCTC 3954 / HTE831).